We begin with the raw amino-acid sequence, 127 residues long: Aspartate 1-decarboxylase (127 aa).

Ser-25 acts as the Schiff-base intermediate with substrate; via pyruvic acid in catalysis. Ser-25 carries the post-translational modification Pyruvic acid (Ser). A substrate-binding site is contributed by Thr-57. The active-site Proton donor is Tyr-58. 73–75 (GAA) serves as a coordination point for substrate.

It belongs to the PanD family. Heterooctamer of four alpha and four beta subunits. The cofactor is pyruvate. Post-translationally, is synthesized initially as an inactive proenzyme, which is activated by self-cleavage at a specific serine bond to produce a beta-subunit with a hydroxyl group at its C-terminus and an alpha-subunit with a pyruvoyl group at its N-terminus.

The protein resides in the cytoplasm. It carries out the reaction L-aspartate + H(+) = beta-alanine + CO2. Its pathway is cofactor biosynthesis; (R)-pantothenate biosynthesis; beta-alanine from L-aspartate: step 1/1. In terms of biological role, catalyzes the pyruvoyl-dependent decarboxylation of aspartate to produce beta-alanine. In Bacillus licheniformis (strain ATCC 14580 / DSM 13 / JCM 2505 / CCUG 7422 / NBRC 12200 / NCIMB 9375 / NCTC 10341 / NRRL NRS-1264 / Gibson 46), this protein is Aspartate 1-decarboxylase.